Consider the following 1222-residue polypeptide: ATP-dependent helicase/nuclease subunit A (1222 aa).

One can recognise a UvrD-like helicase ATP-binding domain in the interval 39 to 495; that stretch reads QKRTAQQIEA…ILLKENFRSQ (457 aa). An ATP-binding site is contributed by 60–67; sequence ASAGSGKT. In terms of domain architecture, UvrD-like helicase C-terminal spans 524 to 810; sequence QLIAGSHAQT…NLMTIHKSKG (287 aa).

Belongs to the helicase family. AddA subfamily. In terms of assembly, heterodimer of AddA and AddB/RexB. The cofactor is Mg(2+).

It catalyses the reaction Couples ATP hydrolysis with the unwinding of duplex DNA by translocating in the 3'-5' direction.. The enzyme catalyses ATP + H2O = ADP + phosphate + H(+). In terms of biological role, the heterodimer acts as both an ATP-dependent DNA helicase and an ATP-dependent, dual-direction single-stranded exonuclease. Recognizes the chi site generating a DNA molecule suitable for the initiation of homologous recombination. The AddA nuclease domain is required for chi fragment generation; this subunit has the helicase and 3' -&gt; 5' nuclease activities. The protein is ATP-dependent helicase/nuclease subunit A of Streptococcus pyogenes serotype M2 (strain MGAS10270).